Here is a 704-residue protein sequence, read N- to C-terminus: Nucleolar and coiled-body phosphoprotein 1 (704 aa).

One can recognise a LisH domain in the interval 10-42 (VPSDLYPLVLGFLRDNQLSEVASKFAKATGATQ). N6-acetyllysine is present on lysine 33. The disordered stretch occupies residues 65–638 (KVKLQSNGPV…PFRRVREEEI (574 aa)). Glycyl lysine isopeptide (Lys-Gly) (interchain with G-Cter in SUMO2) cross-links involve residues lysine 67 and lysine 76. 2 Acidic serine cluster repeats span residues 84–95 (SSDSSEDSSEEE) and 127–138 (ESSSSEESSEEE). The tract at residues 84-570 (SSDSSEDSSE…GKAGKESEEE (487 aa)) is 11 X 12 AA approximate repeats of an acidic serine cluster. Residues serine 87, serine 88, serine 91, and serine 92 each carry the phosphoserine modification. Residues 87 to 96 (SSEDSSEEED) show a composition bias toward acidic residues. Serine 88 and serine 91 each carry diphosphoserine. Low complexity-rich tracts occupy residues 120–132 (KAAA…SSSE) and 149–160 (QQKAVKPQAKAV). Residues 170–181 (SESESDSSSEDE) form an Acidic serine cluster 3 repeat. The segment covering 170 to 182 (SESESDSSSEDEA) has biased composition (acidic residues). Composition is skewed to low complexity over residues 183–207 (PQTQ…KAPA), 215–236 (AQPK…SSSS), and 246–279 (AAPL…SSED). Residues lysine 189 and lysine 200 each participate in a glycyl lysine isopeptide (Lys-Gly) (interchain with G-Cter in SUMO2) cross-link. 3 Acidic serine cluster repeats span residues 231-242 (SSSSSSDDSEEE), 274-285 (SSSSEDSSSEEE), and 335-346 (SSEESDSSSEEE). Glycyl lysine isopeptide (Lys-Gly) (interchain with G-Cter in SUMO2) cross-links involve residues lysine 352 and lysine 357. 3 positions are modified to phosphoserine: serine 372, serine 373, and serine 376. The stretch at 373 to 384 (SDSSDSDSSEDE) is one Acidic serine cluster 7 repeat. Residues lysine 399, lysine 405, lysine 410, and lysine 416 each participate in a glycyl lysine isopeptide (Lys-Gly) (interchain with G-Cter in SUMO2) cross-link. Residues 408–419 (AAKAVATPKQPA) show a composition bias toward low complexity. N6-acetyllysine; alternate is present on lysine 424. Residue lysine 424 forms a Glycyl lysine isopeptide (Lys-Gly) (interchain with G-Cter in SUMO1); alternate linkage. Lysine 424 is covalently cross-linked (Glycyl lysine isopeptide (Lys-Gly) (interchain with G-Cter in SUMO2); alternate). Positions 434–444 (SSEEESSSSEE) are enriched in acidic residues. Residues 434-445 (SSEEESSSSEEE) form an Acidic serine cluster 8 repeat. Residues lysine 449 and lysine 461 each participate in a glycyl lysine isopeptide (Lys-Gly) (interchain with G-Cter in SUMO2) cross-link. Serine 465 carries the phosphoserine modification. 2 stretches are compositionally biased toward low complexity: residues 474-485 (AGGDSSSDSESS) and 504-529 (AGAA…SSSE). One copy of the Acidic serine cluster 9 repeat lies at 479 to 490 (SSDSESSSSEEE). A Glycyl lysine isopeptide (Lys-Gly) (interchain with G-Cter in SUMO2) cross-link involves residue lysine 510. Acidic serine cluster repeat units follow at residues 524-535 (SSSSSEDSSEEE) and 559-570 (QNGKAGKESEEE). Phosphoserine is present on serine 567. Residue lysine 584 forms a Glycyl lysine isopeptide (Lys-Gly) (interchain with G-Cter in SUMO2) linkage. Residue serine 587 is modified to Phosphoserine. Position 596 is a phosphothreonine (threonine 596). Residue lysine 609 forms a Glycyl lysine isopeptide (Lys-Gly) (interchain with G-Cter in SUMO2) linkage. Residues threonine 612 and threonine 615 each carry the phosphothreonine modification. Lysine 618 is covalently cross-linked (Glycyl lysine isopeptide (Lys-Gly) (interchain with G-Cter in SUMO2)). Residues serine 627 and serine 648 each carry the phosphoserine modification. Lysine 652 participates in a covalent cross-link: Glycyl lysine isopeptide (Lys-Gly) (interchain with G-Cter in SUMO2). Lysine 668 carries the post-translational modification N6-acetyllysine; alternate. Lysine 668 participates in a covalent cross-link: Glycyl lysine isopeptide (Lys-Gly) (interchain with G-Cter in SUMO2); alternate. The residue at position 688 (arginine 688) is an Omega-N-methylarginine. Serine 691 carries the phosphoserine modification. Residue lysine 700 forms a Glycyl lysine isopeptide (Lys-Gly) (interchain with G-Cter in SUMO2) linkage. Serine 703 carries the post-translational modification Phosphoserine.

It belongs to the NOLC1 family. Interacts with RNA polymerase I 194 kDa subunit (RPA194) and with casein kinase-II. Interacts with DKC1/NAP57, NOP58 and fibrillarin. Post-translationally, undergoes rapid and massive phosphorylation/dephosphorylation cycles on CK2 and PKC sites. NOLC1 is one of the mostly phosphorylated proteins in the cell. Ubiquitinated. Monoubiquitination by the BCR(KBTBD8) complex promotes the formation of a NOLC1-TCOF1 complex that acts as a platform to connect RNA polymerase I with enzymes responsible for ribosomal processing and modification, leading to remodel the translational program of differentiating cells in favor of neural crest specification. In terms of processing, pyrophosphorylated by 5-diphosphoinositol pentakisphosphate (5-IP7). Serine pyrophosphorylation is achieved by Mg(2+)-dependent, but enzyme independent transfer of a beta-phosphate from a inositol pyrophosphate to a pre-phosphorylated serine residue.

The protein resides in the cytoplasm. It localises to the nucleus. The protein localises to the nucleolus. Functionally, nucleolar protein that acts as a regulator of RNA polymerase I by connecting RNA polymerase I with enzymes responsible for ribosomal processing and modification. Required for neural crest specification: following monoubiquitination by the BCR(KBTBD8) complex, associates with TCOF1 and acts as a platform to connect RNA polymerase I with enzymes responsible for ribosomal processing and modification, leading to remodel the translational program of differentiating cells in favor of neural crest specification. Involved in nucleologenesis, possibly by playing a role in the maintenance of the fundamental structure of the fibrillar center and dense fibrillar component in the nucleolus. It has intrinsic GTPase and ATPase activities. This chain is Nucleolar and coiled-body phosphoprotein 1, found in Rattus norvegicus (Rat).